Here is a 209-residue protein sequence, read N- to C-terminus: Guanylate kinase (209 aa).

A Guanylate kinase-like domain is found at 7 to 185 (GNLYIVAAPS…AAMELQSIVI (179 aa)). ATP is bound at residue 14 to 21 (APSGGGKT).

Belongs to the guanylate kinase family.

It is found in the cytoplasm. It carries out the reaction GMP + ATP = GDP + ADP. Essential for recycling GMP and indirectly, cGMP. The chain is Guanylate kinase from Legionella pneumophila (strain Lens).